Here is a 260-residue protein sequence, read N- to C-terminus: Histidine-binding periplasmic protein (260 aa).

A signal peptide spans 1-22 (MKKLALSLSLVLAFSSATAAFA). Cysteine 60 and cysteine 67 are joined by a disulfide. Residues serine 91, serine 92, serine 94, arginine 99, threonine 143, and aspartate 183 each coordinate L-histidine.

This sequence belongs to the bacterial solute-binding protein 3 family. The complex is composed of two ATP-binding proteins (HisP), two transmembrane proteins (HisM and HisQ) and a solute-binding protein (HisJ).

The protein localises to the periplasm. In terms of biological role, part of the ABC transporter complex HisPMQJ involved in histidine transport. Binds histidine. Interacts with HisQMP and stimulates ATPase activity of HisP, which results in histidine translocation. May have some additional function(s) in translocation that is independent of the stimulation of ATP hydrolysis. This is Histidine-binding periplasmic protein from Salmonella typhimurium (strain LT2 / SGSC1412 / ATCC 700720).